Consider the following 158-residue polypeptide: Crossover junction endodeoxyribonuclease RuvC (158 aa).

Residues D7, E66, and D139 contribute to the active site. Residues D7, E66, and D139 each contribute to the Mg(2+) site.

It belongs to the RuvC family. In terms of assembly, homodimer which binds Holliday junction (HJ) DNA. The HJ becomes 2-fold symmetrical on binding to RuvC with unstacked arms; it has a different conformation from HJ DNA in complex with RuvA. In the full resolvosome a probable DNA-RuvA(4)-RuvB(12)-RuvC(2) complex forms which resolves the HJ. It depends on Mg(2+) as a cofactor.

The protein localises to the cytoplasm. The catalysed reaction is Endonucleolytic cleavage at a junction such as a reciprocal single-stranded crossover between two homologous DNA duplexes (Holliday junction).. The RuvA-RuvB-RuvC complex processes Holliday junction (HJ) DNA during genetic recombination and DNA repair. Endonuclease that resolves HJ intermediates. Cleaves cruciform DNA by making single-stranded nicks across the HJ at symmetrical positions within the homologous arms, yielding a 5'-phosphate and a 3'-hydroxyl group; requires a central core of homology in the junction. The consensus cleavage sequence is 5'-(A/T)TT(C/G)-3'. Cleavage occurs on the 3'-side of the TT dinucleotide at the point of strand exchange. HJ branch migration catalyzed by RuvA-RuvB allows RuvC to scan DNA until it finds its consensus sequence, where it cleaves and resolves the cruciform DNA. The polypeptide is Crossover junction endodeoxyribonuclease RuvC (Campylobacter lari (strain RM2100 / D67 / ATCC BAA-1060)).